The primary structure comprises 1072 residues: DNA-directed RNA polymerase subunit beta (1072 aa).

It belongs to the RNA polymerase beta chain family. As to quaternary structure, in plastids the minimal PEP RNA polymerase catalytic core is composed of four subunits: alpha, beta, beta', and beta''. When a (nuclear-encoded) sigma factor is associated with the core the holoenzyme is formed, which can initiate transcription.

The protein localises to the plastid. The protein resides in the chloroplast. It carries out the reaction RNA(n) + a ribonucleoside 5'-triphosphate = RNA(n+1) + diphosphate. DNA-dependent RNA polymerase catalyzes the transcription of DNA into RNA using the four ribonucleoside triphosphates as substrates. This Eucalyptus globulus subsp. globulus (Tasmanian blue gum) protein is DNA-directed RNA polymerase subunit beta.